Consider the following 281-residue polypeptide: Glycerol uptake facilitator protein (281 aa).

Topologically, residues 1–5 (MSQTS) are cytoplasmic. A helical membrane pass occupies residues 6–34 (TLKGQCIAEFLGTGLLIFFGVGCVAALKV). Topologically, residues 35–39 (AGASF) are periplasmic. A helical transmembrane segment spans residues 40–60 (GQWEISVIWGLGVAMAIYLTA). Topologically, residues 61 to 63 (GVS) are cytoplasmic. Residues 64–67 (GAHL) lie within the membrane without spanning it. The NPA 1 motif lies at 68–70 (NPA). Residues 68–78 (NPAVTIALWLF) constitute an intramembrane region (helical). The Cytoplasmic segment spans residues 79 to 84 (ACFDKR). A helical transmembrane segment spans residues 85-108 (KVIPFIVSQVAGAFCAAALVYGLY). Residues 109–143 (YNLFFDFEQTHHIVRGSVESVDLAGTFSTYPNPHI) lie on the Periplasmic side of the membrane. The chain crosses the membrane as a helical span at residues 144 to 169 (NFVQAFAVEMVITAILMGLILALTDD). Topologically, residues 170–177 (GNGVPRGP) are cytoplasmic. The chain crosses the membrane as a helical span at residues 178-194 (LAPLLIGLLIAVIGASM). Over 195-198 (GPLT) the chain is Periplasmic. An intramembrane segment occupies 199-202 (GFAM). The NPA 2 motif lies at 203-205 (NPA). An intramembrane region (helical) is located at residues 203–216 (NPARDFGPKVFAWL). Residues 217–231 (AGWGNVAFTGGRDIP) lie on the Periplasmic side of the membrane. The helical transmembrane segment at 232-254 (YFLVPLFGPIVGAIVGAFAYRKL) threads the bilayer. Topologically, residues 255–281 (IGRHLPCDICVVEEKETTTPSEQKASL) are cytoplasmic.

The protein belongs to the MIP/aquaporin (TC 1.A.8) family. In terms of assembly, homotetramer.

It localises to the cell inner membrane. The enzyme catalyses glycerol(in) = glycerol(out). Its function is as follows. Mediates glycerol diffusion across the cytoplasmic membrane via a pore-type mechanism. The polypeptide is Glycerol uptake facilitator protein (glpF) (Escherichia coli O157:H7).